Here is a 90-residue protein sequence, read N- to C-terminus: DNA-binding protein HU-1 (90 aa).

A Phosphothreonine modification is found at Thr4.

This sequence belongs to the bacterial histone-like protein family. Homodimer.

Its function is as follows. Histone-like DNA-binding protein which is capable of wrapping DNA to stabilize it, and thus to prevent its denaturation under extreme environmental conditions. The chain is DNA-binding protein HU-1 (hup2) from Halalkalibacterium halodurans (strain ATCC BAA-125 / DSM 18197 / FERM 7344 / JCM 9153 / C-125) (Bacillus halodurans).